We begin with the raw amino-acid sequence, 274 residues long: Small ribosomal subunit protein uS2 (274 aa).

The interval A255–E274 is disordered.

Belongs to the universal ribosomal protein uS2 family.

This chain is Small ribosomal subunit protein uS2, found in Gloeobacter violaceus (strain ATCC 29082 / PCC 7421).